The primary structure comprises 241 residues: Ribonuclease PH (241 aa).

Residues R89 and 127–129 (GTR) contribute to the phosphate site.

Belongs to the RNase PH family. In terms of assembly, homohexameric ring arranged as a trimer of dimers.

It carries out the reaction tRNA(n+1) + phosphate = tRNA(n) + a ribonucleoside 5'-diphosphate. Phosphorolytic 3'-5' exoribonuclease that plays an important role in tRNA 3'-end maturation. Removes nucleotide residues following the 3'-CCA terminus of tRNAs; can also add nucleotides to the ends of RNA molecules by using nucleoside diphosphates as substrates, but this may not be physiologically important. Probably plays a role in initiation of 16S rRNA degradation (leading to ribosome degradation) during starvation. In Xylella fastidiosa (strain M23), this protein is Ribonuclease PH.